The following is a 577-amino-acid chain: 2-succinyl-5-enolpyruvyl-6-hydroxy-3-cyclohexene-1-carboxylate synthase (577 aa).

Belongs to the TPP enzyme family. MenD subfamily. In terms of assembly, homodimer. Requires Mg(2+) as cofactor. The cofactor is Mn(2+). Thiamine diphosphate is required as a cofactor.

The enzyme catalyses isochorismate + 2-oxoglutarate + H(+) = 5-enolpyruvoyl-6-hydroxy-2-succinyl-cyclohex-3-ene-1-carboxylate + CO2. Its pathway is quinol/quinone metabolism; 1,4-dihydroxy-2-naphthoate biosynthesis; 1,4-dihydroxy-2-naphthoate from chorismate: step 2/7. It participates in quinol/quinone metabolism; menaquinone biosynthesis. In terms of biological role, catalyzes the thiamine diphosphate-dependent decarboxylation of 2-oxoglutarate and the subsequent addition of the resulting succinic semialdehyde-thiamine pyrophosphate anion to isochorismate to yield 2-succinyl-5-enolpyruvyl-6-hydroxy-3-cyclohexene-1-carboxylate (SEPHCHC). The polypeptide is 2-succinyl-5-enolpyruvyl-6-hydroxy-3-cyclohexene-1-carboxylate synthase (Porphyromonas gingivalis (strain ATCC BAA-308 / W83)).